Reading from the N-terminus, the 286-residue chain is Transcription initiation factor IIA large subunit (286 aa).

Disordered stretches follow at residues Asn-120–Thr-145, Thr-167–Glu-195, and Lys-208–Glu-236. Residues Ser-175–Glu-195 are compositionally biased toward basic and acidic residues. The segment covering Asp-214–Glu-236 has biased composition (acidic residues).

Belongs to the TFIIA subunit 1 family. In terms of assembly, TFIIA is a heterodimer composed of the large TOA1 and a small TOA2 subunits. Interacts with KAP122.

The protein resides in the cytoplasm. The protein localises to the nucleus. In terms of biological role, TFIIA is a component of the transcription machinery of RNA polymerase II and implicated in the regulation of basal transcription. Interacts with TBP (the TATA-binding protein). This chain is Transcription initiation factor IIA large subunit (TOA1), found in Saccharomyces cerevisiae (strain ATCC 204508 / S288c) (Baker's yeast).